A 204-amino-acid polypeptide reads, in one-letter code: Pyrrolidone-carboxylate peptidase (204 aa).

Catalysis depends on residues Glu78, Cys141, and His165.

The protein belongs to the peptidase C15 family. As to quaternary structure, homotetramer.

The protein localises to the cytoplasm. It carries out the reaction Release of an N-terminal pyroglutamyl group from a polypeptide, the second amino acid generally not being Pro.. Functionally, removes 5-oxoproline from various penultimate amino acid residues except L-proline. This chain is Pyrrolidone-carboxylate peptidase, found in Levilactobacillus brevis (strain ATCC 367 / BCRC 12310 / CIP 105137 / JCM 1170 / LMG 11437 / NCIMB 947 / NCTC 947) (Lactobacillus brevis).